The following is a 533-amino-acid chain: Peptide chain release factor 3 (533 aa).

Residues 9 to 284 (ARRRTFAIIS…ALCELSPPPL (276 aa)) form the tr-type G domain. GTP contacts are provided by residues 18–25 (SHPDAGKT), 95–99 (DTPGH), and 149–152 (NKLD).

Belongs to the TRAFAC class translation factor GTPase superfamily. Classic translation factor GTPase family. PrfC subfamily.

The protein localises to the cytoplasm. Functionally, increases the formation of ribosomal termination complexes and stimulates activities of RF-1 and RF-2. It binds guanine nucleotides and has strong preference for UGA stop codons. It may interact directly with the ribosome. The stimulation of RF-1 and RF-2 is significantly reduced by GTP and GDP, but not by GMP. The sequence is that of Peptide chain release factor 3 from Cupriavidus taiwanensis (strain DSM 17343 / BCRC 17206 / CCUG 44338 / CIP 107171 / LMG 19424 / R1) (Ralstonia taiwanensis (strain LMG 19424)).